We begin with the raw amino-acid sequence, 267 residues long: PF03932 family protein CutC (267 aa).

This sequence belongs to the CutC family.

The protein resides in the cytoplasm. The sequence is that of PF03932 family protein CutC from Xylella fastidiosa (strain Temecula1 / ATCC 700964).